The following is a 426-amino-acid chain: Tubby protein homolog 1 (426 aa).

Residues 16 to 28 (QRKMLEDKQKQKR) form a required for localization to cilia in AWB sensory neurons region. Positions 19–39 (MLEDKQKQKRHQSAGSVRTTS) are disordered.

It belongs to the TUB family. Interacts with rgb-3. As to expression, expressed in ciliated sensory neurons.

The protein localises to the cytoplasm. Its subcellular location is the cell projection. It is found in the axon. The protein resides in the dendrite. It localises to the cilium. Its function is as follows. Has a role in fat regulation independent of daf-16. Implicated in ciliar sensory function which is required for normal sensory behavior such as chemotaxis. Required for extension and growth of sensory neuronal cilia during postembryonic development, potentially via mediating signaling protein transport and localization of PI(4,5)P2 to the ciliary base. Functions in life span control via the insulin/IGF-1 pathway. Thought to be involved in neuronal trafficking. The protein is Tubby protein homolog 1 of Caenorhabditis elegans.